Reading from the N-terminus, the 236-residue chain is Phosphoribosylaminoimidazole-succinocarboxamide synthase (236 aa).

This sequence belongs to the SAICAR synthetase family.

The catalysed reaction is 5-amino-1-(5-phospho-D-ribosyl)imidazole-4-carboxylate + L-aspartate + ATP = (2S)-2-[5-amino-1-(5-phospho-beta-D-ribosyl)imidazole-4-carboxamido]succinate + ADP + phosphate + 2 H(+). Its pathway is purine metabolism; IMP biosynthesis via de novo pathway; 5-amino-1-(5-phospho-D-ribosyl)imidazole-4-carboxamide from 5-amino-1-(5-phospho-D-ribosyl)imidazole-4-carboxylate: step 1/2. The polypeptide is Phosphoribosylaminoimidazole-succinocarboxamide synthase (Akkermansia muciniphila (strain ATCC BAA-835 / DSM 22959 / JCM 33894 / BCRC 81048 / CCUG 64013 / CIP 107961 / Muc)).